Consider the following 339-residue polypeptide: Methyltransferase ptaI (339 aa).

It belongs to the methyltransferase superfamily.

It functions in the pathway secondary metabolite biosynthesis. Methyltransferase; part of the gene cluster that mediates the biosynthesis of pestheic acid, a diphenyl ether which is a biosynthetic precursor of the unique chloropupukeananes. The biosynthesis initiates from condensation of acetate and malonate units catalyzed by the non-reducing PKS ptaA. As the ptaA protein is TE/CLC domain-deficient, hydrolysis and Claisen cyclization of the polyketide could be catalyzed by ptaB containing a beta-lactamase domain. The ptaB protein might hydrolyze the thioester bond between the ACP of ptaA and the intermediate to release atrochrysone carboxylic acid, which is spontaneously dehydrated to form endocrocin anthrone. Endocrocin anthrone is then converted to endocrocin, catalyzed by the anthrone oxygenase ptaC. Spontaneous decarboxylation of endocrocin occurs to generate emodin. An O-methyltransferase (ptaH or ptaI) could methylate emodin to form physcion. PtaJ could then catalyze the oxidative cleavage of physcion, and rotation of the intermediate could then afford desmethylisosulochrin. PtaF, a putative NADH-dependent oxidoreductase, might also participate in the oxidative cleavage step. Desmethylisosulochrin is then transformed by another O-methyltransferase (ptaH or ptaI) to form isosulochrin. Chlorination of isosulochrin by ptaM in the cyclohexadienone B ring then produces chloroisosulochrin. PtaE is responsible for the oxidative coupling reactions of both benzophenones isosulouchrin and chloroisosulochrin to RES-1214-1 and pestheic acid respectively, regardless of chlorination. The protein is Methyltransferase ptaI of Pestalotiopsis fici (strain W106-1 / CGMCC3.15140).